Here is a 209-residue protein sequence, read N- to C-terminus: Probable GTP-binding protein EngB (209 aa).

The 192-residue stretch at 12–203 (VSFEIIFVGR…RDRLHEMKRD (192 aa)) folds into the EngB-type G domain. Residues 20–27 (GRSNVGKS), 45–49 (GVTLR), 62–65 (DMPG), 142–145 (NKMD), and 179–181 (ISA) each bind GTP. Positions 27 and 47 each coordinate Mg(2+).

It belongs to the TRAFAC class TrmE-Era-EngA-EngB-Septin-like GTPase superfamily. EngB GTPase family. Requires Mg(2+) as cofactor.

Functionally, necessary for normal cell division and for the maintenance of normal septation. In Methanosarcina barkeri (strain Fusaro / DSM 804), this protein is Probable GTP-binding protein EngB.